We begin with the raw amino-acid sequence, 443 residues long: Ribulose bisphosphate carboxylase large chain (443 aa).

Residues Asn-89 and Thr-139 each contribute to the substrate site. Lys-141 functions as the Proton acceptor in the catalytic mechanism. Lys-143 provides a ligand contact to substrate. 3 residues coordinate Mg(2+): Lys-167, Asp-169, and Glu-170. At Lys-167 the chain carries N6-carboxylysine. His-260 acts as the Proton acceptor in catalysis. The substrate site is built by Arg-261, His-293, and Ser-345.

The protein belongs to the RuBisCO large chain family. Type I subfamily. As to quaternary structure, heterohexadecamer of 8 large chains and 8 small chains; disulfide-linked. The disulfide link is formed within the large subunit homodimers. Mg(2+) serves as cofactor. Post-translationally, the disulfide bond which can form in the large chain dimeric partners within the hexadecamer appears to be associated with oxidative stress and protein turnover.

The protein resides in the plastid. Its subcellular location is the chloroplast. The enzyme catalyses 2 (2R)-3-phosphoglycerate + 2 H(+) = D-ribulose 1,5-bisphosphate + CO2 + H2O. It catalyses the reaction D-ribulose 1,5-bisphosphate + O2 = 2-phosphoglycolate + (2R)-3-phosphoglycerate + 2 H(+). Its function is as follows. RuBisCO catalyzes two reactions: the carboxylation of D-ribulose 1,5-bisphosphate, the primary event in carbon dioxide fixation, as well as the oxidative fragmentation of the pentose substrate in the photorespiration process. Both reactions occur simultaneously and in competition at the same active site. In Villarsia calthifolia (Marsh flower), this protein is Ribulose bisphosphate carboxylase large chain.